The following is a 773-amino-acid chain: 5-methyltetrahydropteroyltriglutamate--homocysteine methyltransferase (773 aa).

5-methyltetrahydropteroyltri-L-glutamate is bound by residues 16–19 (RELK) and K116. Residues 437 to 439 (IGS) and E490 each bind L-homocysteine. L-methionine contacts are provided by residues 437 to 439 (IGS) and E490. 5-methyltetrahydropteroyltri-L-glutamate-binding positions include 521-522 (RC) and W567. Position 605 (D605) interacts with L-homocysteine. Residue D605 participates in L-methionine binding. E611 lines the 5-methyltetrahydropteroyltri-L-glutamate pocket. Residues H647, C649, and E671 each coordinate Zn(2+). H700 acts as the Proton donor in catalysis. Residue C732 participates in Zn(2+) binding.

This sequence belongs to the vitamin-B12 independent methionine synthase family. The cofactor is Zn(2+).

The catalysed reaction is 5-methyltetrahydropteroyltri-L-glutamate + L-homocysteine = tetrahydropteroyltri-L-glutamate + L-methionine. Its pathway is amino-acid biosynthesis; L-methionine biosynthesis via de novo pathway; L-methionine from L-homocysteine (MetE route): step 1/1. Functionally, catalyzes the transfer of a methyl group from 5-methyltetrahydrofolate to homocysteine resulting in methionine formation. This is 5-methyltetrahydropteroyltriglutamate--homocysteine methyltransferase from Alkalilimnicola ehrlichii (strain ATCC BAA-1101 / DSM 17681 / MLHE-1).